Reading from the N-terminus, the 357-residue chain is S-adenosylmethionine:tRNA ribosyltransferase-isomerase (357 aa).

It belongs to the QueA family. As to quaternary structure, monomer.

It is found in the cytoplasm. It catalyses the reaction 7-aminomethyl-7-carbaguanosine(34) in tRNA + S-adenosyl-L-methionine = epoxyqueuosine(34) in tRNA + adenine + L-methionine + 2 H(+). It functions in the pathway tRNA modification; tRNA-queuosine biosynthesis. Transfers and isomerizes the ribose moiety from AdoMet to the 7-aminomethyl group of 7-deazaguanine (preQ1-tRNA) to give epoxyqueuosine (oQ-tRNA). The protein is S-adenosylmethionine:tRNA ribosyltransferase-isomerase of Buchnera aphidicola subsp. Schizaphis graminum (strain Sg).